The following is a 733-amino-acid chain: Nuclear hormone receptor family member nhr-66 (733 aa).

Low complexity-rich tracts occupy residues 113 to 130 (PAIP…SQAS) and 165 to 185 (QQNR…QQQN). Positions 113-190 (PAIPSSSSCS…AQQQNSMARK (78 aa)) are disordered. A DNA-binding region (nuclear receptor) is located at residues 266–343 (VPACAICGTD…SGMDKNSVQH (78 aa)). NR C4-type zinc fingers lie at residues 269-289 (CAIC…CAAC) and 305-326 (CNKG…CRAC). The interval 361-396 (PDAEFEPSAKVSTVSEPSTSSGPSGGFNQNVSSPAG) is disordered. Residues 371 to 382 (VSTVSEPSTSSG) are compositionally biased toward low complexity. In terms of domain architecture, NR LBD spans 444 to 687 (CLGDWFRKPS…ACFNQMLDVE (244 aa)). An AF-2 region spans residues 676-687 (ADACFNQMLDVE). The interval 691–733 (VSPDGQKDSEAEQGPSPVSVPEAARGSYQDDDMPPVLEKNCDL) is disordered.

The protein belongs to the nuclear hormone receptor family. Interacts with nuclear hormone receptor nhr-49; the interaction is direct. Widely expressed, including in hypodermis, gut, muscle, and neuronal cells of the ventral nerve cord, head, and tail ganglia. Expressed in the head ganglion in several sensory and interneurons, including AVA.

It localises to the nucleus. Its function is as follows. Transcription factor. Binds to regulatory elements and regulates transcription of target genes, including the potassium channel accessory subunit mps-2. Negatively regulates transcription of mps-2, thereby modulating age-dependent memory decline. In concert with nuclear hormone receptor nhr-49, involved in regulating target genes with roles in sphingolipid breakdown and lipid remodeling. Plays a role in modulating mitochondrial morphology and function. This is Nuclear hormone receptor family member nhr-66 from Caenorhabditis elegans.